The sequence spans 127 residues: MAEGKKYQINISVNTAYLAEQSDPSADRYVFAYTITIENVGTVAAQLISRHWVITDADDVVQEVKGLGVVGEQPLLRPGETFEYSSGAALATPVGTMQGSYQMVAEDGNKFDAEIPRFTLAMPRVLH.

The region spanning 3 to 127 is the ApaG domain; it reads EGKKYQINIS…FTLAMPRVLH (125 aa).

The chain is Protein ApaG from Thiobacillus denitrificans (strain ATCC 25259 / T1).